Here is a 467-residue protein sequence, read N- to C-terminus: Probable citrate synthase 2, mitochondrial (467 aa).

Catalysis depends on residues histidine 303, histidine 349, and aspartate 404.

The protein belongs to the citrate synthase family. In terms of assembly, homodimer.

The protein localises to the mitochondrion matrix. It catalyses the reaction oxaloacetate + acetyl-CoA + H2O = citrate + CoA + H(+). It functions in the pathway carbohydrate metabolism; tricarboxylic acid cycle; isocitrate from oxaloacetate: step 1/2. The protein is Probable citrate synthase 2, mitochondrial of Aedes aegypti (Yellowfever mosquito).